The primary structure comprises 341 residues: NADH-quinone oxidoreductase subunit H (341 aa).

Helical transmembrane passes span 6–26 (LIVSYLVGFVLLNVLLGLMAY), 76–96 (LVFLVAPLLSFALAPLGAAVI), 118–138 (VAVLYVLALGSVGVYGIILGG), 157–177 (VISYELVLGLSLVGVFILSGS), 198–218 (LPNWYILSQPLAFALFLIAAV), 252–272 (FLAEYINMIVVSLLAATLFLG), 278–298 (FADGVWWLALKALFFLFFYVW), and 313–333 (GLAWKVLLPLALLNIGLTGLV).

The protein belongs to the complex I subunit 1 family. In terms of assembly, NDH-1 is composed of 14 different subunits. Subunits NuoA, H, J, K, L, M, N constitute the membrane sector of the complex.

The protein localises to the cell membrane. The catalysed reaction is a quinone + NADH + 5 H(+)(in) = a quinol + NAD(+) + 4 H(+)(out). In terms of biological role, NDH-1 shuttles electrons from NADH, via FMN and iron-sulfur (Fe-S) centers, to quinones in the respiratory chain. The immediate electron acceptor for the enzyme in this species is believed to be ubiquinone. Couples the redox reaction to proton translocation (for every two electrons transferred, four hydrogen ions are translocated across the cytoplasmic membrane), and thus conserves the redox energy in a proton gradient. This subunit may bind ubiquinone. This chain is NADH-quinone oxidoreductase subunit H, found in Thermomicrobium roseum (strain ATCC 27502 / DSM 5159 / P-2).